Reading from the N-terminus, the 120-residue chain is Chaperonin GroEL (120 aa).

Residue 23 to 27 (DGTTT) participates in ATP binding.

It belongs to the chaperonin (HSP60) family. As to quaternary structure, forms a cylinder of 14 subunits composed of two heptameric rings stacked back-to-back. Interacts with the co-chaperonin GroES.

It localises to the cytoplasm. The catalysed reaction is ATP + H2O + a folded polypeptide = ADP + phosphate + an unfolded polypeptide.. Functionally, together with its co-chaperonin GroES, plays an essential role in assisting protein folding. The GroEL-GroES system forms a nano-cage that allows encapsulation of the non-native substrate proteins and provides a physical environment optimized to promote and accelerate protein folding. This Mycobacterium asiaticum protein is Chaperonin GroEL.